The primary structure comprises 491 residues: Probable ribonuclease FAU-1 (491 aa).

The protein belongs to the FAU-1 family.

Probable RNase involved in rRNA stability through maturation and/or degradation of precursor rRNAs. Binds to RNA in loop regions with AU-rich sequences. The sequence is that of Probable ribonuclease FAU-1 from Thermofilum pendens (strain DSM 2475 / Hrk 5).